Here is a 77-residue protein sequence, read N- to C-terminus: Putative antitoxin MazE7 (77 aa).

Positions 49 to 77 (REASHAETTTQAVRDEDREWEGTVGDGLG) are disordered.

In terms of assembly, forms a complex with cognate toxin MazF7.

Its function is as follows. Antitoxin component of a type II toxin-antitoxin (TA) system. This is Putative antitoxin MazE7 (mazE7) from Mycobacterium tuberculosis (strain CDC 1551 / Oshkosh).